Reading from the N-terminus, the 102-residue chain is ATP-dependent Clp protease adapter protein ClpS (102 aa).

This sequence belongs to the ClpS family. In terms of assembly, binds to the N-terminal domain of the chaperone ClpA.

Functionally, involved in the modulation of the specificity of the ClpAP-mediated ATP-dependent protein degradation. The chain is ATP-dependent Clp protease adapter protein ClpS from Wolinella succinogenes (strain ATCC 29543 / DSM 1740 / CCUG 13145 / JCM 31913 / LMG 7466 / NCTC 11488 / FDC 602W) (Vibrio succinogenes).